We begin with the raw amino-acid sequence, 366 residues long: MSSNVQDIRGWPPPFANAAYQPDASSRRARYGGLQVHNLRQATTANSLVPSIIQGLRAEDRELPSLLLWDDQGLSLFNAILDSPEYYLANKEWALLHNEVHNIVASISSGDRLVELGAGNMKKTALILHTLQSQRKYIHYIACDVDRVALQRGLRNLQAIFPASTSSIKIQGLVATYEDCAAWLQRNPGSGHTSLMWLGNSLANFPPPEASEYIRSFLSTGASLILALDGCQDHEQIARAYEGPSNQKFVLNGLRHANDVLGTDAFDVRNWSFLGRWNPELWMHESFYAAKRDLTLKIGRETFVFRKGETIRSIRSGKWPKPKVVDICREAGGDVVDWWMNPDESYGKSTTLMGYLARVLIDSVSD.

Positions 1-18 (MSSNVQDIRGWPPPFANA) are cleaved as a signal peptide. Residue N270 is glycosylated (N-linked (GlcNAc...) asparagine).

It belongs to the methyltransferase superfamily.

It functions in the pathway secondary metabolite biosynthesis. Functionally, N-methyltransferase; part of the gene cluster that mediates the biosynthesis of the isoquinoline alkaloids fumisoquin A, fumisoquin B and fumisoquin C; as well as small amounts of fumipyrrole as a shunt metabolite. The products of the cluster lead to a brown coloration and are important for growth and conidiation. The nonribosomal peptide synthetase-like protein fsqF, which lacks a canonical condensation domain, is required for addition of a serine-derived dehydroalanine moiety to activated tyrosine but is not essential for the subsequent steps leading to isoquinoline formation. A different enzyme, most likely the ATP-grasp enzyme fsqD, is responsible for activation of tyrosine. Three additional enzymes encoded by the fsq cluster, the N-methyltransferase fsqC, the phenol 2-monooxygenase fsqG and the FAD-dependent oxidase fsqB, catalyze the formation of the isoquinoline ring system in the fumisoquins. FsqB converts the fspF thiolation domain-bound (2S,4S,5S)-2-amino-6-(3,4-dihydroxyphenyl)-4-hydroxy-5-(methylamino)hexanoyl into isoquinoline. The cyclization most likely proceeds via a two-step mechanism, beginning with FAD-dependent oxidation of the methyl group to an iminium species followed by electrophilic attack on the deprotonated phenol. The protein is N-methyltransferase fsqC of Aspergillus fumigatus (strain ATCC MYA-4609 / CBS 101355 / FGSC A1100 / Af293) (Neosartorya fumigata).